The chain runs to 728 residues: 1,4-alpha-glucan branching enzyme GlgB (728 aa).

D405 acts as the Nucleophile in catalysis. E458 functions as the Proton donor in the catalytic mechanism.

This sequence belongs to the glycosyl hydrolase 13 family. GlgB subfamily. Monomer.

It catalyses the reaction Transfers a segment of a (1-&gt;4)-alpha-D-glucan chain to a primary hydroxy group in a similar glucan chain.. It participates in glycan biosynthesis; glycogen biosynthesis. In terms of biological role, catalyzes the formation of the alpha-1,6-glucosidic linkages in glycogen by scission of a 1,4-alpha-linked oligosaccharide from growing alpha-1,4-glucan chains and the subsequent attachment of the oligosaccharide to the alpha-1,6 position. This Shigella boydii serotype 4 (strain Sb227) protein is 1,4-alpha-glucan branching enzyme GlgB.